The sequence spans 322 residues: MQEQRAERLRIALIAGGTSGEREVSLTGADGVERILDKEKYLVSRYDSATDLPRLAADAASIDFAFILLHGLHGEDGTIQGFLDLLGIPYQGSGVLGSALAMDKDLAKEFYYNAELPVADWHTIAAGDFFYSEELIEDLGLPLVVKPACAGSSIGISLAHTEEELLAGINHARDCSAGAIMVEQFIKGRELTCAVLGNDDLQALPVLEIVPGDKYAFFDYEAKYQPGASEEICPALIADALREQVQDHAIRAHQALRLRGYSRTDFIYGEDGKLYLLETNTIPGMTETSILPQEAAATGMDFPSLLDTLIELGLEKSKGKKG.

An ATP-grasp domain is found at 108-311 (KEFYYNAELP…FPSLLDTLIE (204 aa)). Residue 136–192 (IEDLGLPLVVKPACAGSSIGISLAHTEEELLAGINHARDCSAGAIMVEQFIKGRELT) participates in ATP binding. Mg(2+) contacts are provided by aspartate 265, glutamate 278, and asparagine 280.

Belongs to the D-alanine--D-alanine ligase family. Mg(2+) serves as cofactor. Requires Mn(2+) as cofactor.

Its subcellular location is the cytoplasm. It catalyses the reaction 2 D-alanine + ATP = D-alanyl-D-alanine + ADP + phosphate + H(+). It participates in cell wall biogenesis; peptidoglycan biosynthesis. Cell wall formation. This chain is D-alanine--D-alanine ligase, found in Desulfotalea psychrophila (strain LSv54 / DSM 12343).